We begin with the raw amino-acid sequence, 1294 residues long: ATPase PglY (1294 aa).

Residues 1205-1263 (TQAAATPPPAPAASQPTAGDLSLDTPTSDPRIPYTSQETPTSSGGAGTARTSGGRRTTA) form a disordered region. Over residues 1228 to 1244 (DTPTSDPRIPYTSQETP) the composition is skewed to polar residues. The span at 1252 to 1263 (TARTSGGRRTTA) shows a compositional bias: low complexity.

Functionally, BREX systems (bacteriophage exclusion) provide immunity against bacteriophage. Part of a type 2 BREX system. Previously called the phage growth limitation (Pgl) system, it confers protection against bacteriophage phiC31. The bacteria allows one cycle of phage infection, but subsequent cycles are impaired, protecting the original bacterial colony. The system undergoes high rates (10(-3) to 10(-4)) of phase reversion, i.e. loss and regain of phiC31 resistance. When the pglW-pglX-pglY-pglZ genes are transformed into a susceptible S.lividans (strain 1326) they confer resistance to infection by phage phiC31 and phiBT1; all 4 genes are necessary. Its function is as follows. Hydrolyzes ATP but not AMP, ADP, GMP, GDP or GTP; activity is inhibited by the non-hydrolyzable ATP analog 5-adenylyl beta,gamma-imidodiphosphate. This chain is ATPase PglY, found in Streptomyces coelicolor (strain ATCC BAA-471 / A3(2) / M145).